The primary structure comprises 251 residues: Chlorocatechol 1,2-dioxygenase (251 aa).

Residues Y130, Y164, H188, and H190 each contribute to the Fe cation site.

The protein belongs to the intradiol ring-cleavage dioxygenase family. Fe(3+) serves as cofactor.

The catalysed reaction is 3-chlorocatechol + O2 = (2E,4Z)-2-chloromuconate + 2 H(+). The enzyme catalyses 3,4-dichlorocatechol + O2 = (2Z,4Z)-2,3-dichloromuconate + 2 H(+). It carries out the reaction 3,5-dichlorocatechol + O2 = (2E,4E)-2,4-dichloromuconate + 2 H(+). It catalyses the reaction 3,6-dichlorocatechol + O2 = (2E,4E)-2,5-dichloromuconate + H(+). The catalysed reaction is 3,4,6-trichlorocatechol + O2 = (2Z,4E)-2,3,5-trichloromuconate + H(+). Its pathway is xenobiotic degradation. In terms of biological role, chlorocatechol 1,2-dioxygenase involved in the degradation of chlorinated benzenes, that occurs via chlorocatechol intermediates. Displays broad substrate specificity. Preferentially cleaves 3-chlorocatechol and 3,4-dichlorocatechol, and shows lower activity on 3,5-dichlorocatechol, 3,6-dichlorocatechol and 3,4,6-trichlorocatechol in vitro. Is not able to convert 3,4,5-trichlorocatechol and 3,4,5,6-tetrachlorocatechol. Thus, probably functions in the degradation pathways of 1,2-dichlorobenzene, 1,4-dichlorobenzene and 1,2,4-trichlorobenzene (via 3,4-dichlorocatechol, 3,6-dichlorocatechol and 3,4,6-trichlorocatechol intermediates, respectively), which allow Pseudomonas sp. strain P51 to grow on these substrates as the sole carbon and energy source. This chain is Chlorocatechol 1,2-dioxygenase, found in Pseudomonas sp. (strain P51).